The sequence spans 572 residues: Phosphoenolpyruvate-protein phosphotransferase (572 aa).

The active-site Tele-phosphohistidine intermediate is the His-190. Phosphoenolpyruvate is bound by residues Arg-297 and Arg-333. Mg(2+)-binding residues include Glu-432 and Asp-456. Residues 455–456 (ND) and Arg-466 each bind phosphoenolpyruvate. Cys-503 serves as the catalytic Proton donor.

This sequence belongs to the PEP-utilizing enzyme family. Homodimer. It depends on Mg(2+) as a cofactor.

The protein localises to the cytoplasm. It catalyses the reaction L-histidyl-[protein] + phosphoenolpyruvate = N(pros)-phospho-L-histidyl-[protein] + pyruvate. Its function is as follows. General (non sugar-specific) component of the phosphoenolpyruvate-dependent sugar phosphotransferase system (sugar PTS). This major carbohydrate active-transport system catalyzes the phosphorylation of incoming sugar substrates concomitantly with their translocation across the cell membrane. Enzyme I transfers the phosphoryl group from phosphoenolpyruvate (PEP) to the phosphoryl carrier protein (HPr). The sequence is that of Phosphoenolpyruvate-protein phosphotransferase (ptsI) from Listeria innocua serovar 6a (strain ATCC BAA-680 / CLIP 11262).